A 63-amino-acid polypeptide reads, in one-letter code: ATP synthase membrane subunit K, mitochondrial (63 aa).

A helical transmembrane segment spans residues 15–37; that stretch reads TMRGRANVAKATWASLGLVYVLV.

In terms of assembly, F-type ATPases have 2 components, CF(1) - the catalytic core - and CF(0) - the membrane proton channel. CF(1) has five subunits: alpha(3), beta(3), gamma(1), delta(1), epsilon(1). CF(0) has three main subunits: a, b and c. The ATP synthase complex/complex V exists as a monomeric and a dimeric supercomplex that helps shape mitochondrial cristae to optimize proton flow.

The protein resides in the mitochondrion membrane. Its function is as follows. Mitochondrial membrane ATP synthase (F(1)F(0) ATP synthase or Complex V) produces ATP from ADP in the presence of a proton gradient across the membrane which is generated by electron transport complexes of the respiratory chain. F-type ATPases consist of two structural domains, F(1) - containing the extramembraneous catalytic core and F(0) - containing the membrane proton channel, linked together by a central stalk and a peripheral stalk. During catalysis, ATP synthesis in the catalytic domain of F(1) is coupled via a rotary mechanism of the central stalk subunits to proton translocation. ATP5MK is a minor subunit of the mitochondrial membrane ATP synthase required for dimerization of the ATP synthase complex and as such regulates ATP synthesis in the mitochondria. The polypeptide is ATP synthase membrane subunit K, mitochondrial (Drosophila melanogaster (Fruit fly)).